A 186-amino-acid chain; its full sequence is Bis(5'-nucleosyl)-tetraphosphatase, symmetrical (186 aa).

An HD domain is found at 18 to 132 (RYIHTVGVMN…IYVADYIEPN (115 aa)). His-21 contacts ADP. Positions 21, 50, and 51 each coordinate Fe cation. Residues 51-54 (DYAK), His-83, 109-110 (HT), Asp-127, Arg-133, and 170-175 (PVFPDT) contribute to the ADP site. Asp-127 contacts Fe cation.

This sequence belongs to the Ap4A hydrolase YqeK family. As to quaternary structure, homodimer.

The catalysed reaction is P(1),P(4)-bis(5'-adenosyl) tetraphosphate + H2O = 2 ADP + 2 H(+). Functionally, hydrolyzes diadenosine 5',5'''-P1,P4-tetraphosphate (Ap4A) to yield ADP. This Bacillus subtilis (strain 168) protein is Bis(5'-nucleosyl)-tetraphosphatase, symmetrical (yqeK).